The sequence spans 80 residues: Large ribosomal subunit protein uL24 (80 aa).

Belongs to the universal ribosomal protein uL24 family. As to quaternary structure, part of the 50S ribosomal subunit.

Its function is as follows. One of two assembly initiator proteins, it binds directly to the 5'-end of the 23S rRNA, where it nucleates assembly of the 50S subunit. One of the proteins that surrounds the polypeptide exit tunnel on the outside of the subunit. The polypeptide is Large ribosomal subunit protein uL24 (Chlorobium phaeobacteroides (strain BS1)).